The sequence spans 200 residues: MYAYVKGKLTHLYPTHVVVETAGVGYEIQTPNSYRFQKHLDHEVLIHTSLIVREDAQLLYGFSSEEEKDMFLSLIKVTGIGPKSALAILATSTPNEVKRAIENENDTYLTKFPGIGKKTARQIVLDLKGKVKITEEDSDSLLQVDATSTEQDQFVQEAMLALEALGYSKRELAKVEKTLNKNKYDSVDEAVKAGLQLVVS.

A domain I region spans residues 1 to 63; the sequence is MYAYVKGKLT…EDAQLLYGFS (63 aa). The interval 64-142 is domain II; that stretch reads SEEEKDMFLS…ITEEDSDSLL (79 aa). The segment at 143 to 149 is flexible linker; it reads QVDATST. Residues 150–200 form a domain III region; it reads EQDQFVQEAMLALEALGYSKRELAKVEKTLNKNKYDSVDEAVKAGLQLVVS.

Belongs to the RuvA family. Homotetramer. Forms an RuvA(8)-RuvB(12)-Holliday junction (HJ) complex. HJ DNA is sandwiched between 2 RuvA tetramers; dsDNA enters through RuvA and exits via RuvB. An RuvB hexamer assembles on each DNA strand where it exits the tetramer. Each RuvB hexamer is contacted by two RuvA subunits (via domain III) on 2 adjacent RuvB subunits; this complex drives branch migration. In the full resolvosome a probable DNA-RuvA(4)-RuvB(12)-RuvC(2) complex forms which resolves the HJ.

Its subcellular location is the cytoplasm. Its function is as follows. The RuvA-RuvB-RuvC complex processes Holliday junction (HJ) DNA during genetic recombination and DNA repair, while the RuvA-RuvB complex plays an important role in the rescue of blocked DNA replication forks via replication fork reversal (RFR). RuvA specifically binds to HJ cruciform DNA, conferring on it an open structure. The RuvB hexamer acts as an ATP-dependent pump, pulling dsDNA into and through the RuvAB complex. HJ branch migration allows RuvC to scan DNA until it finds its consensus sequence, where it cleaves and resolves the cruciform DNA. This is Holliday junction branch migration complex subunit RuvA from Staphylococcus aureus (strain MRSA252).